We begin with the raw amino-acid sequence, 136 residues long: MGKFMKPGKVVLVLAGRYSGRKAVIVKNIDDGTSDRPYSHALVAGIDRYPRKVTAAMGKKKIAKRSKIKSFVKVYNYNHLMPTRYSVDIPLDKTVVNKDVFRDPALKRKARREAKVKFEEKYKTGKNKWFFQKLRF.

The region spanning 5-40 (MKPGKVVLVLAGRYSGRKAVIVKNIDDGTSDRPYSH) is the KOW domain. 2 positions are modified to N6-acetyllysine: Lys-27 and Lys-93.

The protein belongs to the eukaryotic ribosomal protein eL27 family. Component of the large ribosomal subunit. Interacts with RRP1B. Component of the large ribosomal subunit. Interacts with RRP1B. Interacts with DHX33.

Its subcellular location is the cytoplasm. The protein localises to the cytosol. The protein resides in the rough endoplasmic reticulum. Its function is as follows. Component of the large ribosomal subunit. Required for proper rRNA processing and maturation of 28S and 5.8S rRNAs. In Canis lupus familiaris (Dog), this protein is Large ribosomal subunit protein eL27 (RPL27).